Reading from the N-terminus, the 144-residue chain is Androgenic gland hormone (144 aa).

The N-terminal stretch at 1 to 21 is a signal peptide; the sequence is MKGLVILVSLMCLALYNRICA. 4 cysteine pairs are disulfide-bonded: Cys33–Cys123, Cys42–Cys59, Cys44–Cys141, and Cys124–Cys132. Residues 68–113 constitute a propeptide, c peptide; it reads SAPEDELAFEDYEDQDYFHPRALSIPSEIEHDNEKESDAFSILSRG. A glycan (N-linked (GlcNAc...) (complex) asparagine) is linked at Asn133.

In terms of tissue distribution, androgenic gland.

The protein localises to the secreted. Its function is as follows. Controls sex differentiation and the formation of male appendages, spermatogenesis, pigmentation, and male specific behavior. This is Androgenic gland hormone from Armadillidium vulgare (Pillbug).